Here is a 317-residue protein sequence, read N- to C-terminus: CTP-dependent diacylglycerol kinase 1 (317 aa).

Residues M1–T44 form a disordered region. The Lumenal portion of the chain corresponds to M1–P130. A compositionally biased stretch (low complexity) spans N23–S38. A helical transmembrane segment spans residues L131 to F151. At N152 to E167 the chain is on the cytoplasmic side. A helical membrane pass occupies residues V168–F188. Residues S189–K190 lie on the Lumenal side of the membrane. The helical transmembrane segment at D191 to G211 threads the bilayer. At R212 to S230 the chain is on the cytoplasmic side. A helical transmembrane segment spans residues L231–A251. Residues Y252 to S271 lie on the Lumenal side of the membrane. A helical transmembrane segment spans residues L272–F292. A topological domain (cytoplasmic) is located at residue N293. A helical membrane pass occupies residues W294–F314. Topologically, residues S315 to R317 are lumenal.

This sequence belongs to the DGK1 family. Ca(2+) serves as cofactor. The cofactor is Mg(2+).

It localises to the endoplasmic reticulum membrane. It is found in the nucleus membrane. It catalyses the reaction a 1,2-diacyl-sn-glycerol + CTP = a 1,2-diacyl-sn-glycero-3-phosphate + CDP + H(+). Its function is as follows. CTP-dependent diacylglycerol kinase that catalyzes the phosphorylation of diacylglycerol (DAG) to phosphatidate (PA). Controls phosphatidate levels at the nuclear envelope. May be involved in vesicle trafficking between the endoplasmic reticulum and the Golgi apparatus. In Eremothecium gossypii (strain ATCC 10895 / CBS 109.51 / FGSC 9923 / NRRL Y-1056) (Yeast), this protein is CTP-dependent diacylglycerol kinase 1 (DGK1).